A 1238-amino-acid chain; its full sequence is Virulence sensor protein BvgS (1238 aa).

An N-terminal signal peptide occupies residues 1–32 (MPAPHRLYPRSLICLAQALLAWALLAWAPAQA). Residues 33–307 (SQELTLVGKA…REQQWMADHP (275 aa)) lie on the Cytoplasmic side of the membrane. The chain crosses the membrane as a helical span at residues 308–331 (VVKVAVLNLFAPFTLFRTDEQFGG). Residues 332–541 (ISAAVLQLLQ…PRTWYAYRNE (210 aa)) are Periplasmic-facing. A helical transmembrane segment spans residues 542–563 (IYLLIGLGLLSALLFLSWIVYL). At 564–1238 (RRQIRQRKRA…LEQRPHQDQP (675 aa)) the chain is on the cytoplasmic side. A PAS domain is found at 580 to 651 (QLEFMRVLID…MHEFLLTRVA (72 aa)). A PAC domain is found at 652–708 (AEREPRFEDRDVTLHGRTRHVYQWTIPYGDSLGELKGIIGGWIDITERAELLRKLHD). A Histidine kinase domain is found at 726 to 948 (TMSHEIRTPM…TVSVDLRLTM (223 aa)). H729 is subject to Phosphohistidine; by autocatalysis. A Response regulatory domain is found at 974–1095 (RVLVVDDHKP…ALRQRLNEAV (122 aa)). D1023 carries the post-translational modification 4-aspartylphosphate. Residues 1133-1228 (DEALIRQLLE…AALETQLRAW (96 aa)) enclose the HPt domain. A Phosphohistidine modification is found at H1172.

Post-translationally, activation requires a sequential transfer of a phosphate group from a His in the primary transmitter domain, to an Asp in the receiver domain and to a His in the secondary transmitter domain.

The protein resides in the cell inner membrane. It catalyses the reaction ATP + protein L-histidine = ADP + protein N-phospho-L-histidine.. Its function is as follows. Member of the two-component regulatory system BvgS/BvgA. Phosphorylates BvgA via a four-step phosphorelay in response to environmental signals. The protein is Virulence sensor protein BvgS (bvgS) of Bordetella pertussis (strain Tohama I / ATCC BAA-589 / NCTC 13251).